The sequence spans 52 residues: Light-harvesting protein B800/830/1020 alpha-1 chain (52 aa).

Topologically, residues 1 to 12 are cytoplasmic; that stretch reads MWRIWKVFDPRR. A helical membrane pass occupies residues 13 to 33; the sequence is ILIATAIWLIIIALTIHVILM. H29 is a binding site for a bacteriochlorophyll. At 34-52 the chain is on the periplasmic side; it reads TTERFNWLEGAPAAEYYSS.

It belongs to the antenna complex alpha subunit family. As to quaternary structure, the core complex is formed by different alpha and beta chains, binding bacteriochlorophyll molecules, and arranged most probably in tetrameric structures disposed around the reaction center. The non-pigmented gamma chains may constitute additional components.

It localises to the cell inner membrane. Functionally, antenna complexes are light-harvesting systems, which transfer the excitation energy to the reaction centers. This chain is Light-harvesting protein B800/830/1020 alpha-1 chain, found in Halorhodospira halochloris (Ectothiorhodospira halochloris).